Consider the following 503-residue polypeptide: Cytochrome P450 3A15 (503 aa).

Cysteine 442 contributes to the heme binding site.

The protein belongs to the cytochrome P450 family. It depends on heme as a cofactor.

The protein localises to the endoplasmic reticulum membrane. Its subcellular location is the microsome membrane. It carries out the reaction an organic molecule + reduced [NADPH--hemoprotein reductase] + O2 = an alcohol + oxidized [NADPH--hemoprotein reductase] + H2O + H(+). Its function is as follows. Cytochromes P450 are a group of heme-thiolate monooxygenases. In liver microsomes, this enzyme is involved in an NADPH-dependent electron transport pathway. It oxidizes a variety of structurally unrelated compounds, including steroids, fatty acids, and xenobiotics. The protein is Cytochrome P450 3A15 (CYP3A15) of Cavia porcellus (Guinea pig).